The following is a 531-amino-acid chain: UDP-glucuronosyltransferase 2B13 (531 aa).

An N-terminal signal peptide occupies residues 1-24; that stretch reads MPVKCISVLLLLLQLSCCFSSGSC. N-linked (GlcNAc...) asparagine glycosylation is found at N69, N101, and N317. A helical transmembrane segment spans residues 495 to 511; sequence VIGFLLACVAITTYLIV.

The protein belongs to the UDP-glycosyltransferase family.

The protein localises to the microsome membrane. It localises to the endoplasmic reticulum membrane. It catalyses the reaction glucuronate acceptor + UDP-alpha-D-glucuronate = acceptor beta-D-glucuronoside + UDP + H(+). Its function is as follows. UDPGT is of major importance in the conjugation and subsequent elimination of potentially toxic xenobiotics and endogenous compounds. Acts on small phenolic agents such as 2-beta-naphthol and 4-methylumbelliferone as well as bulky phenolic compounds like 2-hydroxy- and 4-hydroxybiphenyl. In contrast to 2B16 it is active toward octylgallate. This chain is UDP-glucuronosyltransferase 2B13 (UGT2B13), found in Oryctolagus cuniculus (Rabbit).